We begin with the raw amino-acid sequence, 315 residues long: Homocysteine S-methyltransferase YbgG (315 aa).

The Hcy-binding domain occupies 2–309 (NPIQHILDTY…ENIQEIAAWA (308 aa)). Residues cysteine 229, cysteine 294, and cysteine 295 each coordinate Zn(2+).

Zn(2+) is required as a cofactor.

The catalysed reaction is S-methyl-L-methionine + L-homocysteine = 2 L-methionine + H(+). In Bacillus subtilis (strain 168), this protein is Homocysteine S-methyltransferase YbgG (ybgG).